We begin with the raw amino-acid sequence, 338 residues long: Anthranilate phosphoribosyltransferase (338 aa).

5-phospho-alpha-D-ribose 1-diphosphate contacts are provided by residues Gly-81, 84 to 85 (GD), Thr-89, 91 to 94 (NIST), 109 to 117 (KHGNRAVSS), and Ser-121. Residue Gly-81 coordinates anthranilate. Ser-93 provides a ligand contact to Mg(2+). Asn-112 lines the anthranilate pocket. An anthranilate-binding site is contributed by Arg-167. Mg(2+) is bound by residues Asp-226 and Glu-227.

Belongs to the anthranilate phosphoribosyltransferase family. In terms of assembly, homodimer. Requires Mg(2+) as cofactor.

It carries out the reaction N-(5-phospho-beta-D-ribosyl)anthranilate + diphosphate = 5-phospho-alpha-D-ribose 1-diphosphate + anthranilate. It functions in the pathway amino-acid biosynthesis; L-tryptophan biosynthesis; L-tryptophan from chorismate: step 2/5. Catalyzes the transfer of the phosphoribosyl group of 5-phosphorylribose-1-pyrophosphate (PRPP) to anthranilate to yield N-(5'-phosphoribosyl)-anthranilate (PRA). In Myxococcus xanthus (strain DK1622), this protein is Anthranilate phosphoribosyltransferase.